Consider the following 210-residue polypeptide: Syntaxin-binding protein 6 (210 aa).

S2 is subject to N-acetylserine. Residues 151-210 (GNSILHSAADSVTSAVQKASQALNERGERLGRAEEKTEDLKNSAQQFAETAHKLAMKHKC) form the v-SNARE coiled-coil homology domain.

As to quaternary structure, part of a ternary complex containing SNAP25 and STX1A that can be dissociated by NAPA and NSF. Interacts with STX4A. In terms of tissue distribution, detected at low levels in brain, and at very low levels in heart, adrenal gland, testis, liver and kidney.

Its subcellular location is the cytoplasm. The protein localises to the membrane. In terms of biological role, forms non-fusogenic complexes with SNAP25 and STX1A and may thereby modulate the formation of functional SNARE complexes and exocytosis. This is Syntaxin-binding protein 6 (STXBP6) from Homo sapiens (Human).